Consider the following 229-residue polypeptide: Uridylate kinase (229 aa).

Residue 11 to 12 (GS) participates in ATP binding. Gly45 serves as a coordination point for UMP. The ATP site is built by Gly46 and Arg50. UMP-binding positions include Asp67 and 114–120 (TEPGHTT). Thr140, Tyr146, and Asp149 together coordinate ATP.

Belongs to the UMP kinase family. Homohexamer.

The protein localises to the cytoplasm. The enzyme catalyses UMP + ATP = UDP + ADP. It functions in the pathway pyrimidine metabolism; CTP biosynthesis via de novo pathway; UDP from UMP (UMPK route): step 1/1. With respect to regulation, inhibited by UTP. Catalyzes the reversible phosphorylation of UMP to UDP. This chain is Uridylate kinase, found in Thermoplasma acidophilum (strain ATCC 25905 / DSM 1728 / JCM 9062 / NBRC 15155 / AMRC-C165).